A 180-amino-acid chain; its full sequence is Large ribosomal subunit protein uL5c (180 aa).

The protein belongs to the universal ribosomal protein uL5 family. As to quaternary structure, part of the 50S ribosomal subunit; contacts the 5S rRNA.

Its subcellular location is the plastid. The protein localises to the chloroplast. In terms of biological role, binds 5S rRNA, forms part of the central protuberance of the 50S subunit. The sequence is that of Large ribosomal subunit protein uL5c (rpl5) from Stigeoclonium helveticum (Green alga).